The primary structure comprises 356 residues: MQRYPTKQILVGNVKIGGDAPISVQSMTFAKTRDVKECLEQINRLYFAGCDIVRCAVFNKEDIVGLEQVKKESPLPIVADIHFNYSYAVAVSKFVDAIRINPGNIGGKDRIKAVVEACKERNIPIRIGVNSGSLEEQFENKYGRSVKGMVQSALYNIGLLEELEFTDIAVSLKSSDVYNTMQAYRELRPFTSYPFHLGVTEAGTTFHATIKSAIALGGLLLEGIGDTMRVSITGELEEEIKVARAILQDTGLQKSGLNIISCPTCGRLQSDLVSAIKIVEEKTKHIKEPLNVSVMGCVVNAIGEAKGADVAIAFGKGNGLVMRHGEVVARLKEHELVDRFLSEIDDEIKQRASNNG.

The [4Fe-4S] cluster site is built by Cys262, Cys265, Cys297, and Glu304.

The protein belongs to the IspG family. [4Fe-4S] cluster serves as cofactor.

The enzyme catalyses (2E)-4-hydroxy-3-methylbut-2-enyl diphosphate + oxidized [flavodoxin] + H2O + 2 H(+) = 2-C-methyl-D-erythritol 2,4-cyclic diphosphate + reduced [flavodoxin]. It participates in isoprenoid biosynthesis; isopentenyl diphosphate biosynthesis via DXP pathway; isopentenyl diphosphate from 1-deoxy-D-xylulose 5-phosphate: step 5/6. Converts 2C-methyl-D-erythritol 2,4-cyclodiphosphate (ME-2,4cPP) into 1-hydroxy-2-methyl-2-(E)-butenyl 4-diphosphate. This Campylobacter fetus subsp. fetus (strain 82-40) protein is 4-hydroxy-3-methylbut-2-en-1-yl diphosphate synthase (flavodoxin).